Reading from the N-terminus, the 65-residue chain is Large ribosomal subunit protein bL35 (65 aa).

The segment at 1–23 (MPKIKTNRGAAKRFKKTGTGKVK) is disordered. Residues 10-23 (AAKRFKKTGTGKVK) show a composition bias toward basic residues.

Belongs to the bacterial ribosomal protein bL35 family.

The protein is Large ribosomal subunit protein bL35 of Trichlorobacter lovleyi (strain ATCC BAA-1151 / DSM 17278 / SZ) (Geobacter lovleyi).